Consider the following 485-residue polypeptide: MKLKEVLKKLEYNILNGNIEIDIENIQYDSRNIKKNDIFFAIQGYSTDGHKFIESAIEKGAKVIVFDKGFENENMYKDITFIKVKNSRKALAVAASNYYGNPKDKLKLIGVTGTNGKTTSTFMIKSILEEAGFKVGLMGTILNYIGDRKIYAQRTTPESLEIHKLFKDMVDSGVDYCVMEVSSHSLYLDRVYGIEFNEGIFTNLTQDHLDFHKTFENYYNSKLMLFKNSINSVINIDDNYGERILKEIEEKTFTYSIKKYSDLKAESVRLHSRGGEFTVDFKGNKEKINIHIPGEYNVSNALGSILACVNEGISLKVIKRGLEKLSGVPGRCEIVTMGYNLGYDVIVDYAHTPDGLDNVLRTARDFTKGKLISVYGCGGDRDRAKRPIMGRIGTELSDLAILTSDNPRTEEPFSIIDDIVKGVTKDNYIIVQSRREAIKKAMTIAKKDDVIVVAGKGHEDYQILKDKTIHFDEREVIKEIIEELY.

UDP-N-acetyl-alpha-D-muramoyl-L-alanyl-D-glutamate is bound at residue serine 30. 113-119 (GTNGKTT) is a binding site for ATP. UDP-N-acetyl-alpha-D-muramoyl-L-alanyl-D-glutamate is bound by residues 155-156 (TT), serine 182, and arginine 190. Residue lysine 222 is modified to N6-carboxylysine. Residues arginine 381, 405-408 (DNPR), glycine 455, and glutamate 459 each bind meso-2,6-diaminopimelate. The Meso-diaminopimelate recognition motif motif lies at 405–408 (DNPR).

The protein belongs to the MurCDEF family. MurE subfamily. It depends on Mg(2+) as a cofactor. In terms of processing, carboxylation is probably crucial for Mg(2+) binding and, consequently, for the gamma-phosphate positioning of ATP.

It localises to the cytoplasm. The enzyme catalyses UDP-N-acetyl-alpha-D-muramoyl-L-alanyl-D-glutamate + meso-2,6-diaminopimelate + ATP = UDP-N-acetyl-alpha-D-muramoyl-L-alanyl-gamma-D-glutamyl-meso-2,6-diaminopimelate + ADP + phosphate + H(+). The protein operates within cell wall biogenesis; peptidoglycan biosynthesis. In terms of biological role, catalyzes the addition of meso-diaminopimelic acid to the nucleotide precursor UDP-N-acetylmuramoyl-L-alanyl-D-glutamate (UMAG) in the biosynthesis of bacterial cell-wall peptidoglycan. This chain is UDP-N-acetylmuramoyl-L-alanyl-D-glutamate--2,6-diaminopimelate ligase, found in Clostridium tetani (strain Massachusetts / E88).